The primary structure comprises 252 residues: Thiazole synthase (252 aa).

Catalysis depends on lysine 91, which acts as the Schiff-base intermediate with DXP. 1-deoxy-D-xylulose 5-phosphate is bound by residues glycine 152, 179–180, and 201–202; these read AG and NT.

It belongs to the ThiG family. As to quaternary structure, homotetramer. Forms heterodimers with either ThiH or ThiS.

The protein resides in the cytoplasm. It catalyses the reaction [ThiS sulfur-carrier protein]-C-terminal-Gly-aminoethanethioate + 2-iminoacetate + 1-deoxy-D-xylulose 5-phosphate = [ThiS sulfur-carrier protein]-C-terminal Gly-Gly + 2-[(2R,5Z)-2-carboxy-4-methylthiazol-5(2H)-ylidene]ethyl phosphate + 2 H2O + H(+). It participates in cofactor biosynthesis; thiamine diphosphate biosynthesis. In terms of biological role, catalyzes the rearrangement of 1-deoxy-D-xylulose 5-phosphate (DXP) to produce the thiazole phosphate moiety of thiamine. Sulfur is provided by the thiocarboxylate moiety of the carrier protein ThiS. In vitro, sulfur can be provided by H(2)S. The sequence is that of Thiazole synthase from Erwinia pyrifoliae (strain DSM 12162 / Ep1/96).